Reading from the N-terminus, the 239-residue chain is THAP domain-containing protein 3 (239 aa).

The THAP-type zinc finger occupies 1–82; the sequence is MPKSCAARQC…LKHNAVPTVF (82 aa). 2 disordered regions span residues 88-125 and 139-174; these read PQLV…LGRK and VGGL…PTQP. An HCFC1-binding motif (HBM) motif is present at residues 176 to 179; it reads DHSY.

In terms of assembly, component of a THAP1/THAP3-HCFC1-OGT complex that contains at least, either THAP1 or THAP3, HCFC1 and OGT. Interacts directly with OGT and HCFC1 (via its HBM).

Component of a THAP1/THAP3-HCFC1-OGT complex that is required for the regulation of the transcriptional activity of RRM1. This chain is THAP domain-containing protein 3 (THAP3), found in Bos taurus (Bovine).